A 100-amino-acid chain; its full sequence is Suppressor of silencing 2b (100 aa).

The Nuclear localization signal signature appears at 22 to 27 (KRRRRR).

It belongs to the cucumovirus/ilarvirus protein 2b family. As to quaternary structure, homotetramer. Interacts with host AGO1; this interaction blocks AGO1 cleavage activity to attenuate RNA silencing and thus counter host defense. Interacts with host JAZ.

Its subcellular location is the host nucleus. In terms of biological role, multifunctional protein that plays two independent roles: viral suppressor of host RNAi (VSR) and viral inducer of host attractiveness to insect vectors (VIA). Acts as a suppressor of RNA-mediated gene silencing, also known as post-transcriptional gene silencing (PTGS), a mechanism of plant viral defense that limits the accumulation of viral RNAs. May directly interfere with mobile silencing signaling. Also inhibits signal transduction by the phytohormone jasmonate, making the infected plant more attractive to aphids, which are the second host to play a role as a dissemination vector. Acts by binding to and inhibiting JAZ degradation in the host. This Cucumis sativus (Cucumber) protein is Suppressor of silencing 2b.